A 1029-amino-acid chain; its full sequence is Tyrosine-protein kinase-like otk (1029 aa).

The N-terminal stretch at Met-1–Ala-18 is a signal peptide. Topologically, residues Ser-19–Ala-577 are extracellular. Ig-like C2-type domains lie at Ser-21–Ser-104, Pro-105–Ser-195, Pro-247–Ser-361, Pro-364–Asn-459, and Pro-464–Val-554. N-linked (GlcNAc...) asparagine glycosylation occurs at Asn-35. 4 disulfides stabilise this stretch: Cys-42/Cys-91, Cys-133/Cys-184, Cys-272/Cys-350, and Cys-395/Cys-443. Residues Asn-332, Asn-413, Asn-425, Asn-440, Asn-453, Asn-508, and Asn-520 are each glycosylated (N-linked (GlcNAc...) asparagine). A disulfide bridge connects residues Cys-486 and Cys-538. A helical membrane pass occupies residues Val-578–Trp-598. Over Cys-599–Lys-1029 the chain is Cytoplasmic. Disordered regions lie at residues Leu-613–Ala-675 and Ser-714–Met-756. Over residues Lys-651 to Arg-669 the composition is skewed to polar residues. Ser-674 carries the post-translational modification Phosphoserine. A Protein kinase; inactive domain is found at Leu-688–Met-1024. A compositionally biased stretch (basic and acidic residues) spans Ser-716 to Ser-727.

Belongs to the protein kinase superfamily. Tyr protein kinase family. Insulin receptor subfamily. In terms of assembly, interacts with plexA; component of a receptor complex that mediates the repulsive signaling in response to Semaphorin ligands.

Its subcellular location is the cell membrane. Its function is as follows. Acts as a calcium-dependent, homophilic cell adhesion molecule that regulates neural recognition during the development of the nervous system. Component of the repulsive Plexin signaling response to regulate motor axon guidance at the embryonic stage. Also component of a receptor complex that is required in the adult visual system to innervate the lamina layer; specific targeting of R1-R6 axons. The protein is Tyrosine-protein kinase-like otk of Drosophila sechellia (Fruit fly).